Here is an 87-residue protein sequence, read N- to C-terminus: MNIKLINIGFGNIVSANRIISIVSPESAPIKRIIQEARDRNMLIDATYGRRTRAVIIADSDHVILSAVQPETVAQRLTSKDDLEGEA.

Belongs to the RemA family.

The chain is Putative regulatory protein BH2513 from Halalkalibacterium halodurans (strain ATCC BAA-125 / DSM 18197 / FERM 7344 / JCM 9153 / C-125) (Bacillus halodurans).